The primary structure comprises 557 residues: Probable protein kinase UbiB (557 aa).

The region spanning 121–509 is the Protein kinase domain; the sequence is SFDTVPLASA…RKLQTRVVTA (389 aa). ATP-binding positions include 127–135 and K154; that span reads LASASIAQV. D289 (proton acceptor) is an active-site residue. 2 helical membrane-spanning segments follow: residues 506–526 and 535–555; these read VVTA…YGLH and VPVW…VAWL.

The protein belongs to the ABC1 family. UbiB subfamily.

Its subcellular location is the cell inner membrane. Its pathway is cofactor biosynthesis; ubiquinone biosynthesis [regulation]. Its function is as follows. Is probably a protein kinase regulator of UbiI activity which is involved in aerobic coenzyme Q (ubiquinone) biosynthesis. This Xanthomonas euvesicatoria pv. vesicatoria (strain 85-10) (Xanthomonas campestris pv. vesicatoria) protein is Probable protein kinase UbiB.